A 379-amino-acid chain; its full sequence is Putative cysteine desulfurase IscS 1 (379 aa).

Residues 71 to 72 (GT), Asn-151, Gln-179, and 199 to 201 (SGH) contribute to the pyridoxal 5'-phosphate site. Residue Lys-202 is modified to N6-(pyridoxal phosphate)lysine. Residue Thr-237 coordinates pyridoxal 5'-phosphate. Catalysis depends on Cys-325, which acts as the Cysteine persulfide intermediate. Cys-325 provides a ligand contact to [2Fe-2S] cluster.

It belongs to the class-V pyridoxal-phosphate-dependent aminotransferase family. NifS/IscS subfamily. It depends on pyridoxal 5'-phosphate as a cofactor.

The catalysed reaction is (sulfur carrier)-H + L-cysteine = (sulfur carrier)-SH + L-alanine. Functionally, catalyzes the removal of elemental sulfur from cysteine to produce alanine. The protein is Putative cysteine desulfurase IscS 1 (iscS1) of Bacillus subtilis (strain 168).